A 111-amino-acid polypeptide reads, in one-letter code: Large ribosomal subunit protein uL22 (111 aa).

The protein belongs to the universal ribosomal protein uL22 family. In terms of assembly, part of the 50S ribosomal subunit.

Functionally, this protein binds specifically to 23S rRNA; its binding is stimulated by other ribosomal proteins, e.g. L4, L17, and L20. It is important during the early stages of 50S assembly. It makes multiple contacts with different domains of the 23S rRNA in the assembled 50S subunit and ribosome. The globular domain of the protein is located near the polypeptide exit tunnel on the outside of the subunit, while an extended beta-hairpin is found that lines the wall of the exit tunnel in the center of the 70S ribosome. This chain is Large ribosomal subunit protein uL22, found in Pelobacter propionicus (strain DSM 2379 / NBRC 103807 / OttBd1).